We begin with the raw amino-acid sequence, 90 residues long: UPF0297 protein ABC1593 (90 aa).

The protein belongs to the UPF0297 family.

The chain is UPF0297 protein ABC1593 from Shouchella clausii (strain KSM-K16) (Alkalihalobacillus clausii).